A 583-amino-acid chain; its full sequence is COP9 signalosome complex subunit 10 (583 aa).

Positions 1 to 35 are enriched in acidic residues; that stretch reads MSDEEDYAEYMMSEEDMSSFEMDVDSDVEPDDAGL. A disordered region spans residues 1-55; it reads MSDEEDYAEYMMSEEDMSSFEMDVDSDVEPDDAGLEQDQQVTGDDYDGSAGNSGD. Positions 297 to 485 constitute a PCI domain; the sequence is DHYNQSQMLS…DYVYFGEEYF (189 aa).

As to quaternary structure, component of a COP9 signalosome-like (CSN) complex.

Its subcellular location is the cytoplasm. It localises to the nucleus. Its function is as follows. Component of the COP9 signalosome (CSN) complex that acts as an regulator of the ubiquitin (Ubl) conjugation pathway by mediating the deneddylation of the cullin subunit of SCF-type E3 ubiquitin-protein ligase complexes. The CSN complex is involved in the regulation of the mating pheromone response. The protein is COP9 signalosome complex subunit 10 (RRI2) of Kluyveromyces lactis (strain ATCC 8585 / CBS 2359 / DSM 70799 / NBRC 1267 / NRRL Y-1140 / WM37) (Yeast).